An 855-amino-acid chain; its full sequence is Envelope glycoprotein gp150 (855 aa).

Over 1–784 (MAEGFAVNRQ…WLGNIPRYLK (784 aa)) the chain is Extracellular. Residues N220, N258, N269, N274, N298, N330, N336, N342, N418, N422, N448, N469, N481, N499, N518, N531, and N548 are each glycosylated (N-linked (GlcNAc...) asparagine; by host). Residues 615-635 (VMLALATVLSMAGAGTGATAI) form a fusion peptide region. Positions 642–692 (HQVLATHQETIEKITEALKVNNLRLVTLEHQVLVIGLKVEAIEKFLYTAFA) form a coiled coil. An immunosuppression region spans residues 661-679 (VNNLRLVTLEHQVLVIGLK). N-linked (GlcNAc...) asparagine; by host glycosylation is found at N716, N720, and N736. A coiled-coil region spans residues 735 to 771 (YNQTKDLQQKFYEIIMDMEQNNVQGRKGLQQLQEWED). Residues 785–805 (GLLGGILGIGLGVLLLILCLP) form a helical membrane-spanning segment. The Cytoplasmic portion of the chain corresponds to 806–855 (TLVDCIRNCISKVLGYTVIAMPEVEEEEIQPPMELRRNGRQCDMSEKEEE). The disordered stretch occupies residues 835 to 855 (QPPMELRRNGRQCDMSEKEEE).

The mature envelope protein (Env) consists of a trimer of SU-TM heterodimers attached by noncovalent interactions or by a labile interchain disulfide bond. Post-translationally, specific enzymatic cleavages in vivo yield mature proteins. Envelope glycoproteins are synthesized as an inactive precursor that is N-glycosylated and processed likely by host cell furin or by a furin-like protease in the Golgi to yield the mature SU and TM proteins. The cleavage site between SU and TM requires the minimal sequence [KR]-X-[KR]-R.

It localises to the virion membrane. It is found in the host cell membrane. Functionally, the surface protein (SU) attaches the virus to the host cell by binding to its receptor. This interaction triggers the refolding of the transmembrane protein (TM) and is thought to activate its fusogenic potential by unmasking its fusion peptide. Fusion occurs at the host cell plasma membrane. In terms of biological role, the transmembrane protein (TM) acts as a class I viral fusion protein. Under the current model, the protein has at least 3 conformational states: pre-fusion native state, pre-hairpin intermediate state, and post-fusion hairpin state. During viral and target cell membrane fusion, the coiled coil regions (heptad repeats) assume a trimer-of-hairpins structure, positioning the fusion peptide in close proximity to the C-terminal region of the ectodomain. The formation of this structure appears to drive apposition and subsequent fusion of viral and target cell membranes. Membranes fusion leads to delivery of the nucleocapsid into the cytoplasm. In Feline immunodeficiency virus (strain UK2) (FIV), this protein is Envelope glycoprotein gp150 (env).